Reading from the N-terminus, the 151-residue chain is Probable cGMP 3',5'-cyclic phosphodiesterase subunit delta (151 aa).

It belongs to the PDE6D/unc-119 family. In terms of assembly, interacts with Pde6.

The protein resides in the nucleus. Its subcellular location is the cytoplasm. This chain is Probable cGMP 3',5'-cyclic phosphodiesterase subunit delta, found in Culex quinquefasciatus (Southern house mosquito).